Reading from the N-terminus, the 417-residue chain is D-amino acid dehydrogenase (417 aa).

Residue 3–17 (VVILGSGVVGVSTAW) participates in FAD binding.

It belongs to the DadA oxidoreductase family. The cofactor is FAD.

It catalyses the reaction a D-alpha-amino acid + A + H2O = a 2-oxocarboxylate + AH2 + NH4(+). It participates in amino-acid degradation; D-alanine degradation; NH(3) and pyruvate from D-alanine: step 1/1. In terms of biological role, oxidative deamination of D-amino acids. In Pectobacterium carotovorum subsp. carotovorum (strain PC1), this protein is D-amino acid dehydrogenase.